Consider the following 191-residue polypeptide: Probable nicotinate-nucleotide adenylyltransferase (191 aa).

Belongs to the NadD family.

It catalyses the reaction nicotinate beta-D-ribonucleotide + ATP + H(+) = deamido-NAD(+) + diphosphate. The protein operates within cofactor biosynthesis; NAD(+) biosynthesis; deamido-NAD(+) from nicotinate D-ribonucleotide: step 1/1. Functionally, catalyzes the reversible adenylation of nicotinate mononucleotide (NaMN) to nicotinic acid adenine dinucleotide (NaAD). The polypeptide is Probable nicotinate-nucleotide adenylyltransferase (Staphylococcus epidermidis (strain ATCC 12228 / FDA PCI 1200)).